A 111-amino-acid chain; its full sequence is Urease subunit beta (111 aa).

It belongs to the urease beta subunit family. As to quaternary structure, heterotrimer of UreA (gamma), UreB (beta) and UreC (alpha) subunits. Three heterotrimers associate to form the active enzyme.

The protein resides in the cytoplasm. The catalysed reaction is urea + 2 H2O + H(+) = hydrogencarbonate + 2 NH4(+). Its pathway is nitrogen metabolism; urea degradation; CO(2) and NH(3) from urea (urease route): step 1/1. This chain is Urease subunit beta, found in Geobacillus kaustophilus (strain HTA426).